The following is a 510-amino-acid chain: GMP synthase [glutamine-hydrolyzing] (510 aa).

The Glutamine amidotransferase type-1 domain occupies 5–195; it reads MIVVLDFGSQ…VFEVCGCRGD (191 aa). The active-site Nucleophile is Cys82. Active-site residues include His169 and Glu171. The GMPS ATP-PPase domain maps to 196 to 385; that stretch reads WTMENFIDEQ…LGIPDEIVWR (190 aa). 223–229 contributes to the ATP binding site; it reads SGGVDSS.

As to quaternary structure, homodimer.

The catalysed reaction is XMP + L-glutamine + ATP + H2O = GMP + L-glutamate + AMP + diphosphate + 2 H(+). The protein operates within purine metabolism; GMP biosynthesis; GMP from XMP (L-Gln route): step 1/1. Catalyzes the synthesis of GMP from XMP. The chain is GMP synthase [glutamine-hydrolyzing] from Geobacillus kaustophilus (strain HTA426).